A 216-amino-acid polypeptide reads, in one-letter code: Octanoyltransferase (216 aa).

Residues 30–204 (KNNINEIWLL…NCKKFLMMNN (175 aa)) enclose the BPL/LPL catalytic domain. Residues 68–75 (RGGHMTFH), 135–137 (SIG), and 148–150 (GLA) each bind substrate. Catalysis depends on C166, which acts as the Acyl-thioester intermediate.

Belongs to the LipB family.

The protein localises to the cytoplasm. The enzyme catalyses octanoyl-[ACP] + L-lysyl-[protein] = N(6)-octanoyl-L-lysyl-[protein] + holo-[ACP] + H(+). The protein operates within protein modification; protein lipoylation via endogenous pathway; protein N(6)-(lipoyl)lysine from octanoyl-[acyl-carrier-protein]: step 1/2. In terms of biological role, catalyzes the transfer of endogenously produced octanoic acid from octanoyl-acyl-carrier-protein onto the lipoyl domains of lipoate-dependent enzymes. Lipoyl-ACP can also act as a substrate although octanoyl-ACP is likely to be the physiological substrate. The protein is Octanoyltransferase of Wigglesworthia glossinidia brevipalpis.